Here is a 242-residue protein sequence, read N- to C-terminus: tRNA (guanine-N(7)-)-methyltransferase (242 aa).

4 residues coordinate S-adenosyl-L-methionine: E66, E91, D118, and D141. Residue D141 is part of the active site. Residues K145, D177, and 214–217 (TKFE) each bind substrate.

It belongs to the class I-like SAM-binding methyltransferase superfamily. TrmB family. In terms of assembly, monomer.

The enzyme catalyses guanosine(46) in tRNA + S-adenosyl-L-methionine = N(7)-methylguanosine(46) in tRNA + S-adenosyl-L-homocysteine. Its pathway is tRNA modification; N(7)-methylguanine-tRNA biosynthesis. Functionally, catalyzes the formation of N(7)-methylguanine at position 46 (m7G46) in tRNA. In Buchnera aphidicola subsp. Baizongia pistaciae (strain Bp), this protein is tRNA (guanine-N(7)-)-methyltransferase.